We begin with the raw amino-acid sequence, 175 residues long: MTALPIRGPVRIIGIDPGLRRTGWGVIEAEGNRLIYVACGSVEPPDDLPLSSRLLAIHEGLASVLSDHKPMEAAVEQTFVNKDGVATLKLGQARGVAMLAPAMFGISVAEYAPNQVKKTVVGAGHADKQQIAMMLKILLPKAEPPSADAADALAIAITHAHHRQSTALRLKVVGV.

Residues Asp-16, Glu-76, and Asp-148 contribute to the active site. Residues Asp-16, Glu-76, and Asp-148 each coordinate Mg(2+).

This sequence belongs to the RuvC family. In terms of assembly, homodimer which binds Holliday junction (HJ) DNA. The HJ becomes 2-fold symmetrical on binding to RuvC with unstacked arms; it has a different conformation from HJ DNA in complex with RuvA. In the full resolvosome a probable DNA-RuvA(4)-RuvB(12)-RuvC(2) complex forms which resolves the HJ. The cofactor is Mg(2+).

Its subcellular location is the cytoplasm. It catalyses the reaction Endonucleolytic cleavage at a junction such as a reciprocal single-stranded crossover between two homologous DNA duplexes (Holliday junction).. In terms of biological role, the RuvA-RuvB-RuvC complex processes Holliday junction (HJ) DNA during genetic recombination and DNA repair. Endonuclease that resolves HJ intermediates. Cleaves cruciform DNA by making single-stranded nicks across the HJ at symmetrical positions within the homologous arms, yielding a 5'-phosphate and a 3'-hydroxyl group; requires a central core of homology in the junction. The consensus cleavage sequence is 5'-(A/T)TT(C/G)-3'. Cleavage occurs on the 3'-side of the TT dinucleotide at the point of strand exchange. HJ branch migration catalyzed by RuvA-RuvB allows RuvC to scan DNA until it finds its consensus sequence, where it cleaves and resolves the cruciform DNA. This Bradyrhizobium diazoefficiens (strain JCM 10833 / BCRC 13528 / IAM 13628 / NBRC 14792 / USDA 110) protein is Crossover junction endodeoxyribonuclease RuvC.